The sequence spans 354 residues: Bacteriochlorophyll a protein (354 aa).

Bacteriochlorophyll a contacts are provided by H99, H134, H278, H285, and H286.

Homotrimer. Each subunit contains 7 molecules of bacteriochlorophyll a.

Intermediary in the transfer of excitation energy from the chlorophyll to the reaction centers. The protein is Bacteriochlorophyll a protein (fmoA) of Chlorobaculum thiosulfatiphilum (Chlorobium limicola f.sp. thiosulfatophilum).